The chain runs to 608 residues: DNA mismatch repair protein MutL (608 aa).

Residues 363–397 form a disordered region; that stretch reads ASLAMARKPDPPRFHETARPQPDPRHTPGTESVSV. Residues 369 to 390 show a composition bias toward basic and acidic residues; it reads RKPDPPRFHETARPQPDPRHTP.

The protein belongs to the DNA mismatch repair MutL/HexB family.

Functionally, this protein is involved in the repair of mismatches in DNA. It is required for dam-dependent methyl-directed DNA mismatch repair. May act as a 'molecular matchmaker', a protein that promotes the formation of a stable complex between two or more DNA-binding proteins in an ATP-dependent manner without itself being part of a final effector complex. This Pelobacter propionicus (strain DSM 2379 / NBRC 103807 / OttBd1) protein is DNA mismatch repair protein MutL.